The chain runs to 351 residues: Spermidine/putrescine import ATP-binding protein PotA (351 aa).

In terms of domain architecture, ABC transporter spans L6 to I236. Residue G38–T45 participates in ATP binding.

This sequence belongs to the ABC transporter superfamily. Spermidine/putrescine importer (TC 3.A.1.11.1) family. As to quaternary structure, the complex is composed of two ATP-binding proteins (PotA), two transmembrane proteins (PotB and PotC) and a solute-binding protein (PotD).

It is found in the cell membrane. The catalysed reaction is ATP + H2O + polyamine-[polyamine-binding protein]Side 1 = ADP + phosphate + polyamineSide 2 + [polyamine-binding protein]Side 1.. In terms of biological role, part of the ABC transporter complex PotABCD involved in spermidine/putrescine import. Responsible for energy coupling to the transport system. The protein is Spermidine/putrescine import ATP-binding protein PotA of Mycoplasma capricolum subsp. capricolum (strain California kid / ATCC 27343 / NCTC 10154).